The chain runs to 68 residues: Protein transport protein Sec61 gamma-2 subunit (68 aa).

Residues methionine 1–glutamate 32 lie on the Cytoplasmic side of the membrane. Residues phenylalanine 33 to isoleucine 61 traverse the membrane as a helical segment. Topologically, residues asparagine 62 to serine 68 are extracellular.

Belongs to the SecE/SEC61-gamma family. Heterotrimeric complex composed of SEC61-alpha, SEC61-beta and SEC61-gamma.

It is found in the endoplasmic reticulum membrane. Necessary for protein translocation in the endoplasmic reticulum. The sequence is that of Protein transport protein Sec61 gamma-2 subunit (Sec61gamma) from Drosophila melanogaster (Fruit fly).